A 511-amino-acid chain; its full sequence is MKDKLVMLIILDGYGINPRKEGNAIEAANKPNIDRFMREYPNTIVRTSGMDVGLPDGQMGNSEVGHTNIGAGRIVYQELTRITKSIQDGDFFEKKEFLDAAENCRKHNSKLHLFGLLSDGGVHSHNTHLYGLLEFAKRQNLKDVYVHCFFDGRDVPPDSAMGYVEELENKIREIGVGEIATVMGRYYAMDRDNRWERVKLAYDAMVLGRGNQAQSAKEAVAESYKRQEFDEFVKPTVIMKNGSPVATVGENDSIIFFNFRPDRAREITRAFTEVNFSGFEREKGYFPVFFVCMTQYDKTFENVVVAFKPESLENTFGEYISKKGLRQLRIAETEKYAHVTFFFNGGVEAVYEGEDRILINSPKVATYDLKPEMSAYEVTDKVLECINKKEYDVIILNYANPDMVGHTGVFEAAKAAIEAIDECLGKVVPAVLEQNGVVLITADHGNSEQMIDYETGGPFTAHTTNPVPLIVIGLGDVKLREGRLADLAPTMLDILGFEKPKEMTGESLIVK.

Residues D12 and S62 each contribute to the Mn(2+) site. The active-site Phosphoserine intermediate is S62. Residues H123, R153–D154, R185, R191, R260–R263, and K335 contribute to the substrate site. Mn(2+) contacts are provided by D402, H406, D443, H444, and H462.

Belongs to the BPG-independent phosphoglycerate mutase family. In terms of assembly, monomer. It depends on Mn(2+) as a cofactor.

The catalysed reaction is (2R)-2-phosphoglycerate = (2R)-3-phosphoglycerate. The protein operates within carbohydrate degradation; glycolysis; pyruvate from D-glyceraldehyde 3-phosphate: step 3/5. Catalyzes the interconversion of 2-phosphoglycerate and 3-phosphoglycerate. This is 2,3-bisphosphoglycerate-independent phosphoglycerate mutase from Acetivibrio thermocellus (strain ATCC 27405 / DSM 1237 / JCM 9322 / NBRC 103400 / NCIMB 10682 / NRRL B-4536 / VPI 7372) (Clostridium thermocellum).